The primary structure comprises 281 residues: Putative thiosulfate sulfurtransferase (281 aa).

Rhodanese domains are found at residues Asn-18 to Lys-125 and Ala-154 to Glu-274. The Cysteine persulfide intermediate role is filled by Cys-233. Position 238 (Arg-238) interacts with substrate.

It carries out the reaction thiosulfate + hydrogen cyanide = thiocyanate + sulfite + 2 H(+). May be a sulfotransferase involved in the formation of thiosulfate. This chain is Putative thiosulfate sulfurtransferase (cysA), found in Saccharopolyspora erythraea (Streptomyces erythraeus).